Here is a 43-residue protein sequence, read N- to C-terminus: Protein PsbN (43 aa).

Residues Leu7–Pro29 form a helical membrane-spanning segment.

This sequence belongs to the PsbN family.

The protein localises to the cellular thylakoid membrane. Functionally, may play a role in photosystem I and II biogenesis. The polypeptide is Protein PsbN (Thermosynechococcus vestitus (strain NIES-2133 / IAM M-273 / BP-1)).